Consider the following 708-residue polypeptide: Assimilatory nitrate reductase (708 aa).

A 4Fe-4S Mo/W bis-MGD-type domain is found at 15–73; that stretch reads TKQVPTTCMRCAVGCGHVHLGSENAYGLETVRGDPSHPVNNGLACGRGIRESADPAGEW. Residues Cys22, Cys25, Cys29, and Cys59 each contribute to the [4Fe-4S] cluster site. A disordered region spans residues 586–613; it reads TTGREADGYNTGVRSRSDTPEEPVARVN.

The protein belongs to the prokaryotic molybdopterin-containing oxidoreductase family. NasA/NapA/NarB subfamily. Is probably a monomer. Initially characterized as a dimer of proteins with a MW of 105 and 50 kDa. [4Fe-4S] cluster is required as a cofactor. It depends on Mo-bis(molybdopterin guanine dinucleotide) as a cofactor.

It is found in the cytoplasm. It catalyses the reaction nitrite + 2 oxidized [2Fe-2S]-[ferredoxin] + H2O = nitrate + 2 reduced [2Fe-2S]-[ferredoxin] + 2 H(+). The protein operates within nitrogen metabolism; nitrate reduction (assimilation). Inhibited by cyanide and azide. Nitrate reductase is a key enzyme involved in the first step of nitrate assimilation. Catalyzes the reduction of nitrate to nitrite, using ferredoxin as the electron donor. Can use reduced methyl viologen but neither NADPH nor NADH as electron donors. This chain is Assimilatory nitrate reductase, found in Haloferax mediterranei (strain ATCC 33500 / DSM 1411 / JCM 8866 / NBRC 14739 / NCIMB 2177 / R-4) (Halobacterium mediterranei).